Reading from the N-terminus, the 1848-residue chain is Unconventional myosin-Vb (1848 aa).

Met1 carries the N-acetylmethionine modification. Residues 8–60 (SQCTRVWIPDPDEVWRSAELTKDYKEGDKSLQLRLEDETILEYPIDVQRNQLP) enclose the Myosin N-terminal SH3-like domain. The tract at residues 21-40 (VWRSAELTKDYKEGDKSLQL) is requires for interaction with LIMA1. The Myosin motor domain maps to 69-761 (VGENDLTALS…QVAYLEKLRA (693 aa)). 163-170 (GESGAGKT) contributes to the ATP binding site. The interval 596-630 (KDPVPATTPGKGSSSKISVRSARPPMKVSNKEHKK) is disordered. Residues 640–662 (LHLLMETLNATTPHYVRCIKPND) form an actin-binding region. 6 consecutive IQ domains span residues 769 to 798 (IMIQ…QRYC), 792 to 821 (LTLQ…VLQK), 817 to 848 (VVLQ…FTRA), 840 to 869 (VVIQ…TIQK), 865 to 896 (TTIQ…AFRM), and 888 to 917 (IVIQ…EHLK). Coiled-coil stretches lie at residues 899 to 1266 (ARRE…ILRT) and 1341 to 1471 (RLLE…GMLE). Disordered stretches follow at residues 1093 to 1123 (QTPG…EIGD) and 1166 to 1192 (QLEK…LDPN). The span at 1101–1121 (PSNQSSLESDSNYPSISTSEI) shows a compositional bias: polar residues. Residues 1166–1179 (QLEKREQQDSKKVQ) are compositionally biased toward basic and acidic residues. The residue at position 1446 (Ser1446) is a Phosphoserine. The region spanning 1526 to 1803 (TSTINGIKKV…IRTIQAQLQE (278 aa)) is the Dilute domain.

The protein belongs to the TRAFAC class myosin-kinesin ATPase superfamily. Myosin family. In terms of assembly, component of the CART complex, at least composed of ACTN4, HGS/HRS, MYO5B and TRIM3. Interacts with RAB11FIP2, RAB11A, and RAB8A. Found in a complex with CFTR and RAB11A. Interacts with NPC1L1;. Interacts with LIMA1.

The protein localises to the cytoplasm. May be involved in vesicular trafficking via its association with the CART complex. The CART complex is necessary for efficient transferrin receptor recycling but not for EGFR degradation. Required in a complex with RAB11A and RAB11FIP2 for the transport of NPC1L1 to the plasma membrane. Together with RAB11A participates in CFTR trafficking to the plasma membrane and TF (transferrin) recycling in nonpolarized cells. Together with RAB11A and RAB8A participates in epithelial cell polarization. Together with RAB25 regulates transcytosis. Required for proper localization of bile salt export pump ABCB11 at the apical/canalicular plasma membrane of hepatocytes. The protein is Unconventional myosin-Vb (MYO5B) of Homo sapiens (Human).